We begin with the raw amino-acid sequence, 434 residues long: Bcl-2-like protein 13 (434 aa).

The short motif at 14–30 (ETKYVVLSYLGLLSQEK) is the BH4 element. S35 bears the Phosphoserine mark. The BH3 signature appears at 97–113 (IEDCLAHLGERVSQDLK). The short motif at 144 to 154 (ASGWNKLLVPL) is the BH1 element. The BH2 signature appears at 190–203 (FIIQQGGWGSVFSL). The interval 224–245 (LPSDNSGQVSPPESPTVTTSWQ) is disordered. Positions 226–245 (SDNSGQVSPPESPTVTTSWQ) are enriched in polar residues. One copy of the A repeat lies at 243–253 (SWQSESLPVSL). Residues S256, S258, S300, S343, S347, S377, and S387 each carry the phosphoserine modification. Residues 258–268 (SWHTESLPVSL) form an A; approximate repeat. The tract at residues 282–303 (EVKSLDSSGAGEKSENNSSNSD) is disordered. The tract at residues 363 to 398 (RPEAVERAEGAAQLSEERAGSRKKSHTGEAAAVRGA) is disordered. Positions 365–382 (EAVERAEGAAQLSEERAG) are enriched in basic and acidic residues. A helical transmembrane segment spans residues 409–429 (VLLFGGAAAVAILAVAVGVAL).

It belongs to the Bcl-2 family. As to quaternary structure, monomer.

The protein localises to the mitochondrion membrane. Functionally, may promote the activation of caspase-3 and apoptosis. In Mus musculus (Mouse), this protein is Bcl-2-like protein 13 (Bcl2l13).